The following is a 1076-amino-acid chain: DNA-directed RNA polymerase subunit beta (1076 aa).

The protein belongs to the RNA polymerase beta chain family. As to quaternary structure, in plastids the minimal PEP RNA polymerase catalytic core is composed of four subunits: alpha, beta, beta', and beta''. When a (nuclear-encoded) sigma factor is associated with the core the holoenzyme is formed, which can initiate transcription.

The protein localises to the plastid. Its subcellular location is the chloroplast. The catalysed reaction is RNA(n) + a ribonucleoside 5'-triphosphate = RNA(n+1) + diphosphate. Functionally, DNA-dependent RNA polymerase catalyzes the transcription of DNA into RNA using the four ribonucleoside triphosphates as substrates. This Agrostis stolonifera (Creeping bentgrass) protein is DNA-directed RNA polymerase subunit beta.